A 664-amino-acid polypeptide reads, in one-letter code: Xyloglucan-specific galacturonosyltransferase 1 (664 aa).

Over residues 1–21 the composition is skewed to basic residues; sequence MSLSKHLQKLVHKRESKKQPN. Positions 1–49 are disordered; that stretch reads MSLSKHLQKLVHKRESKKQPNKKMPVSVSKLRRPRTSKKTETGNPEKTL. At 1–71 the chain is on the cytoplasmic side; that stretch reads MSLSKHLQKL…IFSARSFLYR (71 aa). The chain crosses the membrane as a helical; Signal-anchor for type II membrane protein span at residues 72–92; it reads VPLTILFLFLIYLWSTSTTVI. Over 93–664 the chain is Lumenal; sequence SGNVVHICIS…SLFKKIAKTV (572 aa). 7 N-linked (GlcNAc...) asparagine glycosylation sites follow: asparagine 126, asparagine 158, asparagine 175, asparagine 181, asparagine 355, asparagine 379, and asparagine 522.

The protein belongs to the glycosyltransferase 47 family. In terms of tissue distribution, root hair specific. Expressed in roots and young leaves.

The protein resides in the golgi apparatus membrane. In terms of biological role, xyloglucan-specific galacturonosyltransferase that forms the beta-D-galactosyluronic acid-(1-&gt;2)-alpha-D-xylosyl linkage. Required for root hair development probably by providing important acidic xyloglucans. The sequence is that of Xyloglucan-specific galacturonosyltransferase 1 from Arabidopsis thaliana (Mouse-ear cress).